The chain runs to 273 residues: Large ribosomal subunit protein uL2 (273 aa).

The disordered stretch occupies residues 228–273 (VDHPHGGGEGKTSGGRHPVTPWGFPTKGKKTRKNKRTSKFIVKKRK). Basic residues predominate over residues 254 to 273 (KGKKTRKNKRTSKFIVKKRK).

Belongs to the universal ribosomal protein uL2 family. In terms of assembly, part of the 50S ribosomal subunit. Forms a bridge to the 30S subunit in the 70S ribosome.

One of the primary rRNA binding proteins. Required for association of the 30S and 50S subunits to form the 70S ribosome, for tRNA binding and peptide bond formation. It has been suggested to have peptidyltransferase activity; this is somewhat controversial. Makes several contacts with the 16S rRNA in the 70S ribosome. The chain is Large ribosomal subunit protein uL2 from Rickettsia massiliae (strain Mtu5).